A 407-amino-acid polypeptide reads, in one-letter code: Tryptophan synthase beta chain (407 aa).

An N6-(pyridoxal phosphate)lysine modification is found at lysine 98.

This sequence belongs to the TrpB family. In terms of assembly, tetramer of two alpha and two beta chains. Pyridoxal 5'-phosphate serves as cofactor.

It catalyses the reaction (1S,2R)-1-C-(indol-3-yl)glycerol 3-phosphate + L-serine = D-glyceraldehyde 3-phosphate + L-tryptophan + H2O. It participates in amino-acid biosynthesis; L-tryptophan biosynthesis; L-tryptophan from chorismate: step 5/5. Its function is as follows. The beta subunit is responsible for the synthesis of L-tryptophan from indole and L-serine. This is Tryptophan synthase beta chain from Bradyrhizobium sp. (strain BTAi1 / ATCC BAA-1182).